The sequence spans 111 residues: Secreted RxLR effector protein 82 (111 aa).

A signal peptide spans 1–17; that stretch reads MFHLYLLLVFETRYTCL. The short motif at 28 to 31 is the RxLR element; the sequence is RWLR.

It belongs to the RxLR effector family.

It is found in the secreted. Its subcellular location is the host nucleus. In terms of biological role, secreted effector that acts as an elicitor that induces cell death in host plant cells. This Plasmopara viticola (Downy mildew of grapevine) protein is Secreted RxLR effector protein 82.